The primary structure comprises 330 residues: Type I restriction enzyme MpnII specificity subunit (330 aa).

Belongs to the type-I restriction system S methylase family. As to quaternary structure, the methyltransferase is composed of M and S polypeptides.

In terms of biological role, the specificity (S) subunit of a type I restriction enzyme; this subunit dictates DNA sequence specificity. The M and S subunits together form a methyltransferase (MTase) that probably methylates A-2 on the top strand and A-3 on the bottom strand of the sequence 5'-GAN(7)TAY-3'. As the bacterial DNA is methylated on this sequence and this is the only type I methylase in the genome, it is probably responsible for all of the methylation on this site in the genome. The R subunit has multiple frameshifts and is probably not expressed in this bacteria. The sequence is that of Type I restriction enzyme MpnII specificity subunit from Mycoplasma pneumoniae (strain ATCC 29342 / M129 / Subtype 1) (Mycoplasmoides pneumoniae).